A 372-amino-acid polypeptide reads, in one-letter code: Forkhead box protein F1-B (372 aa).

Positions 1–51 (MTAEIQQPPSQPPAQSSPMSAATDKHGGQPSAMESASCATKTKKTNAGIRR) are disordered. Over residues 13–22 (PAQSSPMSAA) the composition is skewed to low complexity. A DNA-binding region (fork-head) is located at residues 54–148 (KPPYSYIALI…EEGSFRRRPR (95 aa)).

At the late gastrula stage, expressed in the presumptive ventrolateral mesoderm. During neurulation and tailbud stages, expressed in the lateral plate mesoderm and in the neural crest-derived structures of the head and branchial arches. During tailbud stages, expressed in the pronephros and pronephros ducts and in cells that migrate from the dorsolateral plate to the ventral region of the embryo (with the notable exception of the heart). These cells may represent hematopoietic or endothelial progenitor cells.

It is found in the nucleus. Probable transcription factor. Required for smooth muscle (visceral mesoderm) differentiation during gut development. Also required for normal proliferation of the lateral plate mesoderm. Acts as a downstream mediator of bmp4-signaling. The chain is Forkhead box protein F1-B (foxf1-b) from Xenopus laevis (African clawed frog).